Consider the following 374-residue polypeptide: Ribonuclease D (374 aa).

The region spanning 3-171 (YQLITTDDGL…MAIRLVEETT (169 aa)) is the 3'-5' exonuclease domain. Residues 210–289 (KGRHLACLQK…AETQTMDAAE (80 aa)) form the HRDC domain.

The protein belongs to the RNase D family. The cofactor is a divalent metal cation.

It localises to the cytoplasm. The catalysed reaction is Exonucleolytic cleavage that removes extra residues from the 3'-terminus of tRNA to produce 5'-mononucleotides.. In terms of biological role, exonuclease involved in the 3' processing of various precursor tRNAs. Initiates hydrolysis at the 3'-terminus of an RNA molecule and releases 5'-mononucleotides. This Musicola paradisiaca (strain Ech703) (Dickeya paradisiaca) protein is Ribonuclease D.